The following is a 307-amino-acid chain: 4-hydroxythreonine-4-phosphate dehydrogenase (307 aa).

Substrate is bound by residues His126 and Thr127. A divalent metal cation is bound by residues His156, His195, and His251. Residues Lys259, Asn268, and Arg277 each coordinate substrate.

This sequence belongs to the PdxA family. Homodimer. It depends on Zn(2+) as a cofactor. Requires Mg(2+) as cofactor. Co(2+) is required as a cofactor.

The protein resides in the cytoplasm. It carries out the reaction 4-(phosphooxy)-L-threonine + NAD(+) = 3-amino-2-oxopropyl phosphate + CO2 + NADH. It participates in cofactor biosynthesis; pyridoxine 5'-phosphate biosynthesis; pyridoxine 5'-phosphate from D-erythrose 4-phosphate: step 4/5. In terms of biological role, catalyzes the NAD(P)-dependent oxidation of 4-(phosphooxy)-L-threonine (HTP) into 2-amino-3-oxo-4-(phosphooxy)butyric acid which spontaneously decarboxylates to form 3-amino-2-oxopropyl phosphate (AHAP). This is 4-hydroxythreonine-4-phosphate dehydrogenase from Helicobacter pylori (strain J99 / ATCC 700824) (Campylobacter pylori J99).